A 242-amino-acid polypeptide reads, in one-letter code: Probable transcriptional regulatory protein HEAR0561 (242 aa).

Belongs to the TACO1 family.

The protein resides in the cytoplasm. The sequence is that of Probable transcriptional regulatory protein HEAR0561 from Herminiimonas arsenicoxydans.